The following is a 46-amino-acid chain: Bacteriocin acidocin 8912 (46 aa).

Positions 1–20 (MISSHQKTLTDKELALISGG) are excised as a propeptide.

The protein localises to the secreted. Has a bactericidal effect on sensitive cells but not a bacteriolytic effect. The chain is Bacteriocin acidocin 8912 (acdT) from Lactobacillus acidophilus.